The sequence spans 311 residues: Pyrimidine-specific ribonucleoside hydrolase RihA (311 aa).

H240 is a catalytic residue.

Belongs to the IUNH family. RihA subfamily.

Its function is as follows. Hydrolyzes with equal efficiency cytidine or uridine to ribose and cytosine or uracil, respectively. This is Pyrimidine-specific ribonucleoside hydrolase RihA from Escherichia coli (strain ATCC 8739 / DSM 1576 / NBRC 3972 / NCIMB 8545 / WDCM 00012 / Crooks).